A 122-amino-acid chain; its full sequence is Large ribosomal subunit protein bL20 (122 aa).

This sequence belongs to the bacterial ribosomal protein bL20 family.

In terms of biological role, binds directly to 23S ribosomal RNA and is necessary for the in vitro assembly process of the 50S ribosomal subunit. It is not involved in the protein synthesizing functions of that subunit. The protein is Large ribosomal subunit protein bL20 of Saccharopolyspora erythraea (strain ATCC 11635 / DSM 40517 / JCM 4748 / NBRC 13426 / NCIMB 8594 / NRRL 2338).